We begin with the raw amino-acid sequence, 319 residues long: MANQLRERHQSLKKKYRELIDGDPSLPPEKRKQANLAQLLRDSQDRNKHLGEEIKELQQRLGEVQGDNKLLRMTIAKQRLGDEEIGVRHFAAHEREDLVQQLERAKEQIESLEHDLQASVDELQDVKEERSSYQDKVERLNQELNHILSGHENRIIDVDALCMENRYLQERLKQLHEEVNLLKSNIAKYKNALERRKNSKGQNKSSSSALTGVLSAKQVQDLLSEDHGCSLPATPQSISDLKSLATALLETIHEKNMVIQHQRQTNKILGNRVAELEKKLRTLEVSGLWSLPGLSYNVSIGFGSMFFLKYLCLWLIAVH.

Coiled-coil stretches lie at residues 1 to 199 (MANQ…RKNS) and 259 to 286 (IQHQ…LEVS). Residues 298 to 318 (VSIGFGSMFFLKYLCLWLIAV) form a helical membrane-spanning segment.

Belongs to the CCDC149 family.

The protein localises to the membrane. This Bos taurus (Bovine) protein is Coiled-coil domain-containing protein 149 (CCDC149).